We begin with the raw amino-acid sequence, 219 residues long: Small ribosomal subunit protein uS2m (219 aa).

The protein belongs to the universal ribosomal protein uS2 family. In terms of assembly, component of the mitochondrial ribosome small subunit.

The protein resides in the mitochondrion. The chain is Small ribosomal subunit protein uS2m (RPS2) from Arabidopsis thaliana (Mouse-ear cress).